A 399-amino-acid polypeptide reads, in one-letter code: Large envelope protein (399 aa).

The residue at position 1 (M1) is an N-acetylmethionine. G2 carries N-myristoyl glycine; by host lipidation. The interval G2–A118 is pre-S1. The tract at residues G2–N173 is pre-S. The Virion surface; in external conformation portion of the chain corresponds to G2–G180. The Intravirion; in internal conformation portion of the chain corresponds to G2–R252. S4 is a glycosylation site (N-linked (GlcNAc...) asparagine). Positions K85 to P109 are disordered. A compositionally biased stretch (polar residues) spans S95 to T105. A pre-S2 region spans residues M119–N173. Residues F181–I201 form a helical membrane-spanning segment. At P202 to R252 the chain is on the intravirion; in external conformation side. The chain crosses the membrane as a helical span at residues F253–Y273. The Virion surface segment spans residues Q274 to S347. Residue N319 is glycosylated (N-linked (GlcNAc...) asparagine; by host). A helical transmembrane segment spans residues L348–I368. Topologically, residues W369–W374 are intravirion. Residues G375–V397 traverse the membrane as a helical segment. Topologically, residues Y398–I399 are virion surface.

It belongs to the orthohepadnavirus major surface antigen family. In terms of assembly, in its internal form (Li-HBsAg), interacts with the capsid protein and with the isoform S. Interacts with host chaperone CANX. As to quaternary structure, associates with host chaperone CANX through its pre-S2 N glycan; this association may be essential for isoform M proper secretion. Interacts with isoform L. Interacts with the antigens of satellite virus HDV (HDVAgs); this interaction is required for encapsidation of HDV genomic RNA. In terms of processing, isoform M is N-terminally acetylated by host at a ratio of 90%, and N-glycosylated by host at the pre-S2 region. Myristoylated.

Its subcellular location is the virion membrane. Its function is as follows. The large envelope protein exists in two topological conformations, one which is termed 'external' or Le-HBsAg and the other 'internal' or Li-HBsAg. In its external conformation the protein attaches the virus to cell receptors and thereby initiating infection. This interaction determines the species specificity and liver tropism. This attachment induces virion internalization predominantly through caveolin-mediated endocytosis. The large envelope protein also assures fusion between virion membrane and endosomal membrane. In its internal conformation the protein plays a role in virion morphogenesis and mediates the contact with the nucleocapsid like a matrix protein. The middle envelope protein plays an important role in the budding of the virion. It is involved in the induction of budding in a nucleocapsid independent way. In this process the majority of envelope proteins bud to form subviral lipoprotein particles of 22 nm of diameter that do not contain a nucleocapsid. The sequence is that of Large envelope protein from Hepatitis B virus genotype E (isolate Cote d'Ivoire/ABI-129/2003) (HBV-E).